We begin with the raw amino-acid sequence, 382 residues long: 6-oxocyclohex-1-ene-1-carbonyl-CoA hydrolase (382 aa).

This sequence belongs to the enoyl-CoA hydratase/isomerase family. As to quaternary structure, homohexamer.

The enzyme catalyses 6-oxocyclohex-1-ene-1-carbonyl-CoA + 2 H2O = 3-hydroxy-6-carboxyhexanoyl-CoA + H(+). It participates in aromatic compound metabolism; benzoyl-CoA degradation. Involved in the central benzoyl-CoA catabolism. Catalyzes the addition of one molecule of water to the double bond and the hydrolytic cleavage of C-C bond in the alicyclic ring, 6-oxocyclohex-1-ene-1-carbonyl-CoA (6-OCH-CoA) to yield 3-hydroxypimelyl-CoA. This Syntrophus aciditrophicus (strain SB) protein is 6-oxocyclohex-1-ene-1-carbonyl-CoA hydrolase.